The chain runs to 366 residues: Chorismate synthase (366 aa).

R48 provides a ligand contact to NADP(+). FMN-binding positions include 125 to 127, 241 to 242, G285, 300 to 304, and R326; these read RSS, NA, and KPTSS.

Belongs to the chorismate synthase family. Homotetramer. FMNH2 serves as cofactor.

The catalysed reaction is 5-O-(1-carboxyvinyl)-3-phosphoshikimate = chorismate + phosphate. It participates in metabolic intermediate biosynthesis; chorismate biosynthesis; chorismate from D-erythrose 4-phosphate and phosphoenolpyruvate: step 7/7. Its function is as follows. Catalyzes the anti-1,4-elimination of the C-3 phosphate and the C-6 proR hydrogen from 5-enolpyruvylshikimate-3-phosphate (EPSP) to yield chorismate, which is the branch point compound that serves as the starting substrate for the three terminal pathways of aromatic amino acid biosynthesis. This reaction introduces a second double bond into the aromatic ring system. The polypeptide is Chorismate synthase (Ruegeria pomeroyi (strain ATCC 700808 / DSM 15171 / DSS-3) (Silicibacter pomeroyi)).